The sequence spans 217 residues: Thiamine-phosphate synthase (217 aa).

4-amino-2-methyl-5-(diphosphooxymethyl)pyrimidine-binding positions include 44–48 and N76; that span reads QYREK. Positions 77 and 96 each coordinate Mg(2+). Position 115 (S115) interacts with 4-amino-2-methyl-5-(diphosphooxymethyl)pyrimidine. Position 141 to 143 (141 to 143) interacts with 2-[(2R,5Z)-2-carboxy-4-methylthiazol-5(2H)-ylidene]ethyl phosphate; it reads TKT. Position 144 (K144) interacts with 4-amino-2-methyl-5-(diphosphooxymethyl)pyrimidine. 2-[(2R,5Z)-2-carboxy-4-methylthiazol-5(2H)-ylidene]ethyl phosphate contacts are provided by residues G172 and 192–193; that span reads VS.

The protein belongs to the thiamine-phosphate synthase family. Mg(2+) is required as a cofactor.

It carries out the reaction 2-[(2R,5Z)-2-carboxy-4-methylthiazol-5(2H)-ylidene]ethyl phosphate + 4-amino-2-methyl-5-(diphosphooxymethyl)pyrimidine + 2 H(+) = thiamine phosphate + CO2 + diphosphate. The catalysed reaction is 2-(2-carboxy-4-methylthiazol-5-yl)ethyl phosphate + 4-amino-2-methyl-5-(diphosphooxymethyl)pyrimidine + 2 H(+) = thiamine phosphate + CO2 + diphosphate. It catalyses the reaction 4-methyl-5-(2-phosphooxyethyl)-thiazole + 4-amino-2-methyl-5-(diphosphooxymethyl)pyrimidine + H(+) = thiamine phosphate + diphosphate. The protein operates within cofactor biosynthesis; thiamine diphosphate biosynthesis; thiamine phosphate from 4-amino-2-methyl-5-diphosphomethylpyrimidine and 4-methyl-5-(2-phosphoethyl)-thiazole: step 1/1. Its function is as follows. Condenses 4-methyl-5-(beta-hydroxyethyl)thiazole monophosphate (THZ-P) and 2-methyl-4-amino-5-hydroxymethyl pyrimidine pyrophosphate (HMP-PP) to form thiamine monophosphate (TMP). The protein is Thiamine-phosphate synthase of Lawsonia intracellularis (strain PHE/MN1-00).